The following is a 200-amino-acid chain: Recombination protein RecR (200 aa).

The C4-type zinc finger occupies 58 to 75; it reads CSTCFCLKNLPESNCEFC. The 96-residue stretch at 82–177 folds into the Toprim domain; it reads STLCIVATPK…SISRLALGLP (96 aa).

This sequence belongs to the RecR family.

Its function is as follows. May play a role in DNA repair. It seems to be involved in an RecBC-independent recombinational process of DNA repair. It may act with RecF and RecO. This chain is Recombination protein RecR, found in Chlamydia caviae (strain ATCC VR-813 / DSM 19441 / 03DC25 / GPIC) (Chlamydophila caviae).